The primary structure comprises 238 residues: Pyridoxine 5'-phosphate synthase (238 aa).

Positions 7 and 18 each coordinate 3-amino-2-oxopropyl phosphate. Histidine 43 (proton acceptor) is an active-site residue. 1-deoxy-D-xylulose 5-phosphate contacts are provided by arginine 45 and histidine 50. Glutamate 70 acts as the Proton acceptor in catalysis. Position 100 (threonine 100) interacts with 1-deoxy-D-xylulose 5-phosphate. Histidine 190 serves as the catalytic Proton donor. 3-amino-2-oxopropyl phosphate is bound by residues aspartate 191 and 213–214; that span reads GH.

Belongs to the PNP synthase family. As to quaternary structure, homooctamer; tetramer of dimers.

The protein resides in the cytoplasm. The enzyme catalyses 3-amino-2-oxopropyl phosphate + 1-deoxy-D-xylulose 5-phosphate = pyridoxine 5'-phosphate + phosphate + 2 H2O + H(+). Its pathway is cofactor biosynthesis; pyridoxine 5'-phosphate biosynthesis; pyridoxine 5'-phosphate from D-erythrose 4-phosphate: step 5/5. Functionally, catalyzes the complicated ring closure reaction between the two acyclic compounds 1-deoxy-D-xylulose-5-phosphate (DXP) and 3-amino-2-oxopropyl phosphate (1-amino-acetone-3-phosphate or AAP) to form pyridoxine 5'-phosphate (PNP) and inorganic phosphate. The sequence is that of Pyridoxine 5'-phosphate synthase from Parabacteroides distasonis (strain ATCC 8503 / DSM 20701 / CIP 104284 / JCM 5825 / NCTC 11152).